The chain runs to 388 residues: Putative F-box protein At3g49520 (388 aa).

The 47-residue stretch at 1–47 (MTTISDLPYDLVKEIFSWVPFTSLRAVRSTCKTWNALSKNQIFGKKS) folds into the F-box domain.

In Arabidopsis thaliana (Mouse-ear cress), this protein is Putative F-box protein At3g49520.